The primary structure comprises 86 residues: Protein K3 homolog (86 aa).

The S1 motif domain occupies 15 to 86 (NINDITQGII…LKGYIDVSIV (72 aa)).

It belongs to the poxviridae K3 protein family. Interacts with host PKR kinase.

Its function is as follows. Viral mimic of eIF-2-alpha that acts as a pseudosubstrate for EIF2AK2/PKR kinase. Inhibits therefore eIF-2-alpha phosphorylation by host EIF2AK2/PKR kinase and prevents protein synthesis shutoff. The protein is Protein K3 homolog of Sus scrofa (Pig).